The chain runs to 699 residues: Elongation factor G (699 aa).

In terms of domain architecture, tr-type G spans 8–283; sequence EHIRNIGICA…AVVDFLPSPI (276 aa). GTP-binding positions include 17–24, 81–85, and 135–138; these read AHIDAGKT, DTPGH, and NKMD.

It belongs to the TRAFAC class translation factor GTPase superfamily. Classic translation factor GTPase family. EF-G/EF-2 subfamily.

The protein localises to the cytoplasm. In terms of biological role, catalyzes the GTP-dependent ribosomal translocation step during translation elongation. During this step, the ribosome changes from the pre-translocational (PRE) to the post-translocational (POST) state as the newly formed A-site-bound peptidyl-tRNA and P-site-bound deacylated tRNA move to the P and E sites, respectively. Catalyzes the coordinated movement of the two tRNA molecules, the mRNA and conformational changes in the ribosome. The chain is Elongation factor G from Rickettsia felis (strain ATCC VR-1525 / URRWXCal2) (Rickettsia azadi).